A 240-amino-acid chain; its full sequence is Nuclear receptor-interacting protein 3 (240 aa).

The sequence is that of Nuclear receptor-interacting protein 3 (Nrip3) from Mus musculus (Mouse).